A 1317-amino-acid polypeptide reads, in one-letter code: Toxin protein Tse5 (1317 aa).

Positions 395 to 419 are disordered; that stretch reads GRETRRRRDGQGRMLEEESPGKARY. A compositionally biased stretch (basic and acidic residues) spans 403 to 415; sequence DGQGRMLEEESPG.

Functionally, toxin secreted by the H1 type VI (H1-T6SS) secretion system that acts on bacterial target cells. The producing bacterium is protected by a cognate immunity protein. This chain is Toxin protein Tse5, found in Pseudomonas aeruginosa (strain ATCC 15692 / DSM 22644 / CIP 104116 / JCM 14847 / LMG 12228 / 1C / PRS 101 / PAO1).